A 459-amino-acid chain; its full sequence is Ribulose bisphosphate carboxylase large chain (459 aa).

Lys4 bears the N6,N6,N6-trimethyllysine mark. Positions 113 and 163 each coordinate substrate. The active-site Proton acceptor is the Lys165. Position 167 (Lys167) interacts with substrate. Mg(2+) is bound by residues Lys191, Asp193, and Glu194. N6-carboxylysine is present on Lys191. The Proton acceptor role is filled by His284. Arg285, His317, and Ser369 together coordinate substrate.

The protein belongs to the RuBisCO large chain family. Type I subfamily. Heterohexadecamer of 8 large chains and 8 small chains; disulfide-linked. The disulfide link is formed within the large subunit homodimers. It depends on Mg(2+) as a cofactor. Post-translationally, the disulfide bond which can form in the large chain dimeric partners within the hexadecamer appears to be associated with oxidative stress and protein turnover.

Its subcellular location is the plastid. The protein resides in the chloroplast. The catalysed reaction is 2 (2R)-3-phosphoglycerate + 2 H(+) = D-ribulose 1,5-bisphosphate + CO2 + H2O. It catalyses the reaction D-ribulose 1,5-bisphosphate + O2 = 2-phosphoglycolate + (2R)-3-phosphoglycerate + 2 H(+). Functionally, ruBisCO catalyzes two reactions: the carboxylation of D-ribulose 1,5-bisphosphate, the primary event in carbon dioxide fixation, as well as the oxidative fragmentation of the pentose substrate in the photorespiration process. Both reactions occur simultaneously and in competition at the same active site. The polypeptide is Ribulose bisphosphate carboxylase large chain (Garrya elliptica (Wavyleaf silktassel)).